The primary structure comprises 419 residues: Fumarylacetoacetase (419 aa).

Residue S2 is modified to N-acetylserine. Residue S92 is modified to Phosphoserine. A Ca(2+)-binding site is contributed by D126. Y128 serves as a coordination point for substrate. The active-site Proton acceptor is H133. Substrate is bound at residue R142. Residues E199, E201, and D233 each coordinate Ca(2+). Position 233 (D233) interacts with Mg(2+). Substrate is bound by residues Q240 and Y244. Mg(2+)-binding residues include K253 and T257. S309 is modified (phosphoserine). T350 is a binding site for substrate. Y395 is modified (phosphotyrosine).

It belongs to the FAH family. As to quaternary structure, homodimer. It depends on Ca(2+) as a cofactor. Mg(2+) serves as cofactor. As to expression, mainly expressed in liver and kidney. Lower levels are also detected in many other tissues.

The enzyme catalyses 4-fumarylacetoacetate + H2O = acetoacetate + fumarate + H(+). It functions in the pathway amino-acid degradation; L-phenylalanine degradation; acetoacetate and fumarate from L-phenylalanine: step 6/6. The chain is Fumarylacetoacetase (FAH) from Homo sapiens (Human).